The chain runs to 683 residues: Translation initiation factor IF-2 (683 aa).

Positions 182–351 (KRPPVVTVMG…ILTAEMEELK (170 aa)) constitute a tr-type G domain. Residues 191–198 (GHVDHGKT) are G1. 191–198 (GHVDHGKT) serves as a coordination point for GTP. Residues 216–220 (GITQH) form a G2 region. Residues 237-240 (DTPG) are G3. GTP contacts are provided by residues 237 to 241 (DTPGH) and 291 to 294 (NKID). The interval 291–294 (NKID) is G4. The tract at residues 327–329 (SAH) is G5.

Belongs to the TRAFAC class translation factor GTPase superfamily. Classic translation factor GTPase family. IF-2 subfamily.

The protein localises to the cytoplasm. One of the essential components for the initiation of protein synthesis. Protects formylmethionyl-tRNA from spontaneous hydrolysis and promotes its binding to the 30S ribosomal subunits. Also involved in the hydrolysis of GTP during the formation of the 70S ribosomal complex. The chain is Translation initiation factor IF-2 from Clostridium novyi (strain NT).